The chain runs to 113 residues: uncharacterized protein (113 aa).

The tract at residues 66 to 85 is disordered; the sequence is WSTPTTSSNTQNTQSSSDSY. Positions 67 to 85 are enriched in low complexity; that stretch reads STPTTSSNTQNTQSSSDSY.

This is an uncharacterized protein from Escherichia coli (Bacteriophage T4).